Reading from the N-terminus, the 885-residue chain is MTTLSPDAFAGHTPMMQQYLRIKADHPDTLVFYRMGDFYELFFEDAAKAARLLDLTLTQRGASAGTPIKMAGVPHHAVEQYLAKLVKMGESVAICEQIGDPATSKGPVERKVVRVVTPGTLTDAALLSDKNDVYLLAMCTGHNKRGVAVNIGLAWLNLASGALRLAEIEPDQLAAALERIRPAEILTPDGATDAVPAGAGASKRVPAWHFDIASGTQRLCDQLDVASLDGFGAHSLTSACGAAGALLLYAAATQGQQLRHVRSLKVENETEYIGLDPATRRNLELTETLRGTESPTLYSLLDTCCTTMGSRLLRHWLHHPPRASVAAQSRQQAIGALLDAPANASLDALRSALRQIADVERITGRLALLSARPRDLSSLRDTFAALPALRERISAIVANADSLTRVDAALAPPAECLDLLTSAIAPEPAAMVRDGGVIARGYDAELDELRDISENCGQFLIDLEARERTRTGIANLRVEYNKVHGFYIEVTRGQTDKVPDDYRRRQTLKNAERYITPELKTFEDKALSAQERALARERALYDAVLQALLPFIPECQRVASALAELDLLAAFAERASALDWVAPTFTDEIGIEIEQGRHPVVEAQVEQFIANDCRFGTERKLLLITGPNMGGKSTFMRQTALIALMAYVGSYVPAKSACFGPIDRIFTRIGAADDLAGGRSTFMVEMTEAAAILNDATPQSLVLMDEIGRGTSTFDGLALAWAIARHLLAHNACYTLFATHYFELTQLPAEFPQAANVHLSAVEHGHGIVFLHAVNEGPANQSYGLQVAQLAGVPAPVIRAARKHLAYLEQQSASQHTPQLDLFSAPPVAADDLECADAPALPDTPHPALEKLRDIDPDDLKPREALDLLYELRTLVRSHDADGHA.

626–633 is an ATP binding site; sequence GPNMGGKS.

The protein belongs to the DNA mismatch repair MutS family.

This protein is involved in the repair of mismatches in DNA. It is possible that it carries out the mismatch recognition step. This protein has a weak ATPase activity. This is DNA mismatch repair protein MutS from Burkholderia lata (strain ATCC 17760 / DSM 23089 / LMG 22485 / NCIMB 9086 / R18194 / 383).